A 67-amino-acid polypeptide reads, in one-letter code: Protein AaeX (67 aa).

2 helical membrane passes run 9–29 and 47–67; these read IFGLSFPPVFFELLVPLALFF and PALFNTALYCCLFYLISCLFV.

This sequence belongs to the AaeX family.

Its subcellular location is the cell membrane. The sequence is that of Protein AaeX from Serratia marcescens.